The following is a 932-amino-acid chain: Serine/threonine-protein kinase PknD (932 aa).

Residues 4 to 291 (YDIVRIIGKG…ELKEDIESHL (288 aa)) enclose the Protein kinase domain. ATP is bound by residues 10–18 (IGKGGMGEV) and Lys-33. Asp-138 acts as the Proton acceptor in catalysis.

It belongs to the protein kinase superfamily. Ser/Thr protein kinase family. Autophosphorylated on serine and threonine residues.

The catalysed reaction is L-seryl-[protein] + ATP = O-phospho-L-seryl-[protein] + ADP + H(+). It catalyses the reaction L-threonyl-[protein] + ATP = O-phospho-L-threonyl-[protein] + ADP + H(+). In terms of biological role, together with the serine/threonine kinase Pkn1, may play a role in the specific interactions with host proteins during intracellular growth. This Chlamydia pneumoniae (Chlamydophila pneumoniae) protein is Serine/threonine-protein kinase PknD.